The following is a 104-amino-acid chain: Nucleoid-associated protein Amuc_1227 (104 aa).

This sequence belongs to the YbaB/EbfC family. In terms of assembly, homodimer.

The protein resides in the cytoplasm. The protein localises to the nucleoid. Binds to DNA and alters its conformation. May be involved in regulation of gene expression, nucleoid organization and DNA protection. The protein is Nucleoid-associated protein Amuc_1227 of Akkermansia muciniphila (strain ATCC BAA-835 / DSM 22959 / JCM 33894 / BCRC 81048 / CCUG 64013 / CIP 107961 / Muc).